Consider the following 180-residue polypeptide: Mitochondrial inner membrane protease subunit 2 (180 aa).

Residues 19-39 (LVGITLWVPVLMFVEQHVVSV) traverse the membrane as a helical segment. Active-site residues include S46 and K92.

It belongs to the peptidase S26 family. IMP2 subfamily. In terms of assembly, heterodimer of 2 subunits, imp1 and imp2.

Its subcellular location is the mitochondrion inner membrane. Functionally, catalyzes the removal of transit peptides required for the targeting of proteins from the mitochondrial matrix, across the inner membrane, into the inter-membrane space. The polypeptide is Mitochondrial inner membrane protease subunit 2 (Schizosaccharomyces pombe (strain 972 / ATCC 24843) (Fission yeast)).